A 468-amino-acid polypeptide reads, in one-letter code: Glucose transport protein (468 aa).

Topologically, residues 1-17 are cytoplasmic; it reads MNPSSSPSQSTANVKFV. The helical transmembrane segment at 18-38 threads the bilayer; the sequence is LLISGVAALGGFLFGFDTAVI. Topologically, residues 39 to 58 are extracellular; it reads NGAVAALQKHFQTDSLLTGL. Residues 59-78 traverse the membrane as a helical segment; it reads SVSLALLGSALGAFGAGPIA. Residues 79-84 lie on the Cytoplasmic side of the membrane; it reads DRHGRI. A helical membrane pass occupies residues 85-105; it reads KTMILAAVLFTLSSIGSGLPF. Residues 106-114 are Extracellular-facing; sequence TIWDFIFWR. Residues 115–135 traverse the membrane as a helical segment; that stretch reads VLGGIGVGAASVIAPAYIAEV. Topologically, residues 136–149 are cytoplasmic; sequence SPAHLRGRLGSLQQ. The helical transmembrane segment at 150–170 threads the bilayer; it reads LAIVSGIFIALLSNWFIALMA. Topologically, residues 171–186 are extracellular; the sequence is GGSAQNPWLFGAAAWR. The helical transmembrane segment at 187 to 207 threads the bilayer; the sequence is WMFWTELIPALLYGVCAFLIP. Over 208-265 the chain is Cytoplasmic; that stretch reads ESPRYLVAQGQGEKAAAILWKVEGGDVPSRIEEIQATVSLDHKPRFSDLLSRRGGLLP. Residues 266–286 form a helical membrane-spanning segment; the sequence is IVWIGMGLSALQQFVGINVIF. Residues 287–307 lie on the Extracellular side of the membrane; it reads YYSSVLWRSVGFTEEKSLLIT. The helical transmembrane segment at 308-328 threads the bilayer; sequence VITGFINILTTLVAIAFVDKF. The Cytoplasmic portion of the chain corresponds to 329–331; it reads GRK. The helical transmembrane segment at 332 to 352 threads the bilayer; the sequence is PLLLMGSIGMTITLGILSVVF. The Extracellular portion of the chain corresponds to 353–366; it reads GGATVVNGQPTLTG. The chain crosses the membrane as a helical span at residues 367-387; that stretch reads AAGIIALVTANLYVFSFGFSW. Over 388 to 412 the chain is Cytoplasmic; that stretch reads GPIVWVLLGEMFNNKIRAAALSVAA. A helical transmembrane segment spans residues 413–433; that stretch reads GVQWIANFIISTTFPPLLDTV. Topologically, residues 434-436 are extracellular; it reads GLG. Residues 437–457 form a helical membrane-spanning segment; the sequence is PAYGLYATSAAISIFFIWFFV. Topologically, residues 458–468 are cytoplasmic; sequence KETKGKTLEQM.

The protein belongs to the major facilitator superfamily. Sugar transporter (TC 2.A.1.1) family.

The protein localises to the cell membrane. The protein is Glucose transport protein (gtr) of Synechocystis sp. (strain ATCC 27184 / PCC 6803 / Kazusa).